We begin with the raw amino-acid sequence, 280 residues long: Large ribosomal subunit protein uL2 (280 aa).

Positions 229–280 are disordered; sequence DHPHGGGEGKAPIGHPSPLTPWGKPTLGYKTRKKRKPSDRFIIQRANDKKEK.

Belongs to the universal ribosomal protein uL2 family. As to quaternary structure, part of the 50S ribosomal subunit. Forms a bridge to the 30S subunit in the 70S ribosome.

One of the primary rRNA binding proteins. Required for association of the 30S and 50S subunits to form the 70S ribosome, for tRNA binding and peptide bond formation. It has been suggested to have peptidyltransferase activity; this is somewhat controversial. Makes several contacts with the 16S rRNA in the 70S ribosome. In Dictyoglomus turgidum (strain DSM 6724 / Z-1310), this protein is Large ribosomal subunit protein uL2.